The chain runs to 105 residues: Large ribosomal subunit protein uL24 (105 aa).

Belongs to the universal ribosomal protein uL24 family. As to quaternary structure, part of the 50S ribosomal subunit.

In terms of biological role, one of two assembly initiator proteins, it binds directly to the 5'-end of the 23S rRNA, where it nucleates assembly of the 50S subunit. Its function is as follows. One of the proteins that surrounds the polypeptide exit tunnel on the outside of the subunit. This chain is Large ribosomal subunit protein uL24, found in Mycobacterium tuberculosis (strain CDC 1551 / Oshkosh).